The sequence spans 503 residues: Glutamate--tRNA ligase (503 aa).

The short motif at 14–24 is the 'HIGH' region element; that stretch reads PSPTGSLHIGG. The 'KMSKS' region signature appears at 261-265; the sequence is KLSKR. Lys264 contributes to the ATP binding site.

Belongs to the class-I aminoacyl-tRNA synthetase family. Glutamate--tRNA ligase type 1 subfamily. In terms of assembly, monomer.

It is found in the cytoplasm. The catalysed reaction is tRNA(Glu) + L-glutamate + ATP = L-glutamyl-tRNA(Glu) + AMP + diphosphate. Catalyzes the attachment of glutamate to tRNA(Glu) in a two-step reaction: glutamate is first activated by ATP to form Glu-AMP and then transferred to the acceptor end of tRNA(Glu). This is Glutamate--tRNA ligase from Chloroflexus aurantiacus (strain ATCC 29366 / DSM 635 / J-10-fl).